We begin with the raw amino-acid sequence, 898 residues long: Protein translocase subunit SecA (898 aa).

ATP-binding positions include Gln-87, 105-109 (GEGKT), and Asp-512. Residues 855–865 (MQYQNNEGTSS) are compositionally biased toward polar residues. Residues 855–898 (MQYQNNEGTSSLHEKSEHKIGRNESCPCGSGKKYKHCHGSKAKY) form a disordered region. Positions 866–876 (LHEKSEHKIGR) are enriched in basic and acidic residues. Cys-880, Cys-882, Cys-891, and His-892 together coordinate Zn(2+). A compositionally biased stretch (basic residues) spans 886–898 (KKYKHCHGSKAKY).

It belongs to the SecA family. In terms of assembly, monomer and homodimer. Part of the essential Sec protein translocation apparatus which comprises SecA, SecYEG and auxiliary proteins SecDF-YajC and YidC. The cofactor is Zn(2+).

The protein localises to the cell inner membrane. It localises to the cytoplasm. The enzyme catalyses ATP + H2O + cellular proteinSide 1 = ADP + phosphate + cellular proteinSide 2.. Part of the Sec protein translocase complex. Interacts with the SecYEG preprotein conducting channel. Has a central role in coupling the hydrolysis of ATP to the transfer of proteins into and across the cell membrane, serving both as a receptor for the preprotein-SecB complex and as an ATP-driven molecular motor driving the stepwise translocation of polypeptide chains across the membrane. In Histophilus somni (strain 129Pt) (Haemophilus somnus), this protein is Protein translocase subunit SecA.